The primary structure comprises 469 residues: Probable Xaa-Pro aminopeptidase PEPP (469 aa).

Mn(2+) contacts are provided by Asp-257, Asp-268, Glu-391, and Glu-436.

This sequence belongs to the peptidase M24B family. Requires Mn(2+) as cofactor.

It carries out the reaction Release of any N-terminal amino acid, including proline, that is linked to proline, even from a dipeptide or tripeptide.. Its function is as follows. Catalyzes the removal of a penultimate prolyl residue from the N-termini of peptides. The protein is Probable Xaa-Pro aminopeptidase PEPP (PEPP) of Fusarium vanettenii (strain ATCC MYA-4622 / CBS 123669 / FGSC 9596 / NRRL 45880 / 77-13-4) (Fusarium solani subsp. pisi).